We begin with the raw amino-acid sequence, 136 residues long: ATP synthase epsilon chain, chloroplastic (136 aa).

It belongs to the ATPase epsilon chain family. F-type ATPases have 2 components, CF(1) - the catalytic core - and CF(0) - the membrane proton channel. CF(1) has five subunits: alpha(3), beta(3), gamma(1), delta(1), epsilon(1). CF(0) has three main subunits: a, b and c.

The protein localises to the plastid. Its subcellular location is the chloroplast thylakoid membrane. In terms of biological role, produces ATP from ADP in the presence of a proton gradient across the membrane. The chain is ATP synthase epsilon chain, chloroplastic from Cucumis sativus (Cucumber).